A 155-amino-acid polypeptide reads, in one-letter code: Large ribosomal subunit protein bL17 (155 aa).

Belongs to the bacterial ribosomal protein bL17 family. Part of the 50S ribosomal subunit. Contacts protein L32.

This chain is Large ribosomal subunit protein bL17, found in Bifidobacterium adolescentis (strain ATCC 15703 / DSM 20083 / NCTC 11814 / E194a).